The chain runs to 253 residues: 5'/3'-nucleotidase SurE (253 aa).

Residues D8, D9, S39, and N92 each contribute to the a divalent metal cation site.

It belongs to the SurE nucleotidase family. Requires a divalent metal cation as cofactor.

The protein resides in the cytoplasm. The enzyme catalyses a ribonucleoside 5'-phosphate + H2O = a ribonucleoside + phosphate. The catalysed reaction is a ribonucleoside 3'-phosphate + H2O = a ribonucleoside + phosphate. It carries out the reaction [phosphate](n) + H2O = [phosphate](n-1) + phosphate + H(+). Its function is as follows. Nucleotidase with a broad substrate specificity as it can dephosphorylate various ribo- and deoxyribonucleoside 5'-monophosphates and ribonucleoside 3'-monophosphates with highest affinity to 3'-AMP. Also hydrolyzes polyphosphate (exopolyphosphatase activity) with the preference for short-chain-length substrates (P20-25). Might be involved in the regulation of dNTP and NTP pools, and in the turnover of 3'-mononucleotides produced by numerous intracellular RNases (T1, T2, and F) during the degradation of various RNAs. The sequence is that of 5'/3'-nucleotidase SurE from Escherichia fergusonii (strain ATCC 35469 / DSM 13698 / CCUG 18766 / IAM 14443 / JCM 21226 / LMG 7866 / NBRC 102419 / NCTC 12128 / CDC 0568-73).